The sequence spans 358 residues: Membrane-bound lytic murein transglycosylase C (358 aa).

An N-terminal signal peptide occupies residues 1 to 16; that stretch reads MKKILALLVIAPLLVS. A lipid anchor (N-palmitoyl cysteine) is attached at Cys17. Cys17 carries S-diacylglycerol cysteine lipidation.

It belongs to the transglycosylase Slt family.

The protein resides in the cell outer membrane. The catalysed reaction is Exolytic cleavage of the (1-&gt;4)-beta-glycosidic linkage between N-acetylmuramic acid (MurNAc) and N-acetylglucosamine (GlcNAc) residues in peptidoglycan, from either the reducing or the non-reducing ends of the peptidoglycan chains, with concomitant formation of a 1,6-anhydrobond in the MurNAc residue.. Its function is as follows. Murein-degrading enzyme. May play a role in recycling of muropeptides during cell elongation and/or cell division. The sequence is that of Membrane-bound lytic murein transglycosylase C from Yersinia enterocolitica serotype O:8 / biotype 1B (strain NCTC 13174 / 8081).